The following is a 468-amino-acid chain: Zinc finger protein 672 (468 aa).

4 C2H2-type zinc fingers span residues 15-37 (YSCS…ERAH), 43-65 (FCCL…RWTH), 71-93 (YICS…LGTH), and 100-123 (RPCR…ARQH). The segment at 129 to 151 (HRCPLCARSFRQSALPFHLARAH) adopts a C2H2-type 5; degenerate zinc-finger fold. 9 C2H2-type zinc fingers span residues 167-189 (YHCT…SRIH), 202-224 (HLCG…LQRH), 230-252 (FKCP…QRTH), 258-280 (YACS…QRSH), 286-308 (HVCA…QRSH), 314-336 (FPCP…LRTH), 342-364 (YHCE…LRNH), 370-392 (HKCP…RKTH), and 398-420 (AECT…QRSH).

This sequence belongs to the krueppel C2H2-type zinc-finger protein family.

It localises to the nucleus. May be involved in transcriptional regulation. The polypeptide is Zinc finger protein 672 (Znf672) (Mus musculus (Mouse)).